The primary structure comprises 277 residues: Large ribosomal subunit protein uL2c (277 aa).

Disordered regions lie at residues 24–57 and 226–266; these read IVQSKPEKQLTSGQHRKKGRNNRGVITSRHRGGG and NAAD…HKYS.

The protein belongs to the universal ribosomal protein uL2 family. As to quaternary structure, part of the 50S ribosomal subunit.

It is found in the plastid. The protein localises to the chloroplast. In Zygnema circumcarinatum (Green alga), this protein is Large ribosomal subunit protein uL2c (rpl2).